The primary structure comprises 179 residues: Large ribosomal subunit protein uL5 (179 aa).

The protein belongs to the universal ribosomal protein uL5 family. In terms of assembly, part of the 50S ribosomal subunit; part of the 5S rRNA/L5/L18/L25 subcomplex. Contacts the 5S rRNA and the P site tRNA. Forms a bridge to the 30S subunit in the 70S ribosome.

In terms of biological role, this is one of the proteins that bind and probably mediate the attachment of the 5S RNA into the large ribosomal subunit, where it forms part of the central protuberance. In the 70S ribosome it contacts protein S13 of the 30S subunit (bridge B1b), connecting the 2 subunits; this bridge is implicated in subunit movement. Contacts the P site tRNA; the 5S rRNA and some of its associated proteins might help stabilize positioning of ribosome-bound tRNAs. The sequence is that of Large ribosomal subunit protein uL5 from Chromohalobacter salexigens (strain ATCC BAA-138 / DSM 3043 / CIP 106854 / NCIMB 13768 / 1H11).